The sequence spans 1020 residues: LLGL scribble cell polarity complex component 2 (1020 aa).

WD repeat units follow at residues serine 36–leucine 69, valine 76–phenylalanine 117, isoleucine 132–isoleucine 169, alanine 193–phenylalanine 227, leucine 233–proline 268, alanine 282–threonine 324, valine 332–leucine 366, threonine 388–serine 464, glutamine 508–valine 583, threonine 592–serine 653, valine 713–glutamine 769, glycine 778–lysine 830, leucine 835–serine 888, and valine 902–threonine 925. Serine 653 carries the phosphoserine modification. Residues serine 653–proline 669 are compositionally biased toward basic residues. A disordered region spans residues serine 653 to glutamine 689. 2 disordered regions span residues alanine 938–valine 975 and serine 992–glutamate 1020. Serine 965 and serine 1015 each carry phosphoserine.

Belongs to the WD repeat L(2)GL family. In terms of assembly, interacts with GPSM2/LGN, PRKCI/aPKC and PARD6B/Par-6. The complex is enhanced during mitosis. Interacts with DCAF1. In terms of processing, phosphorylated at Ser-653 by PRKCI. Phosphorylation is enhanced during cell polarization induced by calcium. Phosphorylation may occur during the cell-cell contact-induced cell polarization and may contribute to the segregation of LLGL2 from the PRKCI/aPKC and PARD6B/Par-6 complex.

The protein localises to the cytoplasm. In terms of biological role, part of a complex with GPSM2/LGN, PRKCI/aPKC and PARD6B/Par-6, which may ensure the correct organization and orientation of bipolar spindles for normal cell division. This complex plays roles in the initial phase of the establishment of epithelial cell polarity. The chain is LLGL scribble cell polarity complex component 2 (LLGL2) from Homo sapiens (Human).